The sequence spans 565 residues: Proline--tRNA ligase (565 aa).

The protein belongs to the class-II aminoacyl-tRNA synthetase family. ProS type 1 subfamily. In terms of assembly, homodimer.

Its subcellular location is the cytoplasm. It catalyses the reaction tRNA(Pro) + L-proline + ATP = L-prolyl-tRNA(Pro) + AMP + diphosphate. Catalyzes the attachment of proline to tRNA(Pro) in a two-step reaction: proline is first activated by ATP to form Pro-AMP and then transferred to the acceptor end of tRNA(Pro). As ProRS can inadvertently accommodate and process non-cognate amino acids such as alanine and cysteine, to avoid such errors it has two additional distinct editing activities against alanine. One activity is designated as 'pretransfer' editing and involves the tRNA(Pro)-independent hydrolysis of activated Ala-AMP. The other activity is designated 'posttransfer' editing and involves deacylation of mischarged Ala-tRNA(Pro). The misacylated Cys-tRNA(Pro) is not edited by ProRS. The protein is Proline--tRNA ligase of Francisella tularensis subsp. holarctica (strain FTNF002-00 / FTA).